The primary structure comprises 144 residues: D-aminoacyl-tRNA deacylase (144 aa).

Residues 136–137 carry the Gly-cisPro motif, important for rejection of L-amino acids motif; that stretch reads GP.

This sequence belongs to the DTD family. In terms of assembly, homodimer.

The protein resides in the cytoplasm. It carries out the reaction glycyl-tRNA(Ala) + H2O = tRNA(Ala) + glycine + H(+). The enzyme catalyses a D-aminoacyl-tRNA + H2O = a tRNA + a D-alpha-amino acid + H(+). Functionally, an aminoacyl-tRNA editing enzyme that deacylates mischarged D-aminoacyl-tRNAs. Also deacylates mischarged glycyl-tRNA(Ala), protecting cells against glycine mischarging by AlaRS. Acts via tRNA-based rather than protein-based catalysis; rejects L-amino acids rather than detecting D-amino acids in the active site. By recycling D-aminoacyl-tRNA to D-amino acids and free tRNA molecules, this enzyme counteracts the toxicity associated with the formation of D-aminoacyl-tRNA entities in vivo and helps enforce protein L-homochirality. The polypeptide is D-aminoacyl-tRNA deacylase (Haemophilus influenzae (strain ATCC 51907 / DSM 11121 / KW20 / Rd)).